Here is a 444-residue protein sequence, read N- to C-terminus: 23S rRNA (uracil(1939)-C(5))-methyltransferase RlmD (444 aa).

Residues 5 to 67 form the TRAM domain; the sequence is RNRFDRTPFQ…RHFDEAKTVE (63 aa). Residues Cys80, Cys86, Cys89, and Cys168 each coordinate [4Fe-4S] cluster. S-adenosyl-L-methionine contacts are provided by Gln276, Phe305, Asn310, Glu326, Asp353, and Asp374. Cys400 acts as the Nucleophile in catalysis.

This sequence belongs to the class I-like SAM-binding methyltransferase superfamily. RNA M5U methyltransferase family. RlmD subfamily.

It catalyses the reaction uridine(1939) in 23S rRNA + S-adenosyl-L-methionine = 5-methyluridine(1939) in 23S rRNA + S-adenosyl-L-homocysteine + H(+). Catalyzes the formation of 5-methyl-uridine at position 1939 (m5U1939) in 23S rRNA. The protein is 23S rRNA (uracil(1939)-C(5))-methyltransferase RlmD of Xanthomonas oryzae pv. oryzae (strain KACC10331 / KXO85).